Reading from the N-terminus, the 629-residue chain is 1-deoxy-D-xylulose-5-phosphate synthase (629 aa).

Residues histidine 85 and 126–128 each bind thiamine diphosphate; that span reads GHS. Aspartate 157 contributes to the Mg(2+) binding site. Residues 158–159, asparagine 186, tyrosine 293, and glutamate 373 each bind thiamine diphosphate; that span reads GS. Asparagine 186 serves as a coordination point for Mg(2+).

It belongs to the transketolase family. DXPS subfamily. In terms of assembly, homodimer. Mg(2+) is required as a cofactor. The cofactor is thiamine diphosphate.

The catalysed reaction is D-glyceraldehyde 3-phosphate + pyruvate + H(+) = 1-deoxy-D-xylulose 5-phosphate + CO2. It participates in metabolic intermediate biosynthesis; 1-deoxy-D-xylulose 5-phosphate biosynthesis; 1-deoxy-D-xylulose 5-phosphate from D-glyceraldehyde 3-phosphate and pyruvate: step 1/1. In terms of biological role, catalyzes the acyloin condensation reaction between C atoms 2 and 3 of pyruvate and glyceraldehyde 3-phosphate to yield 1-deoxy-D-xylulose-5-phosphate (DXP). This chain is 1-deoxy-D-xylulose-5-phosphate synthase, found in Helicobacter hepaticus (strain ATCC 51449 / 3B1).